A 684-amino-acid chain; its full sequence is MIDRYKHQQLRIGSVSPQQISAWAKKILPNGEIIGEVTKPYTFHYKTNKPEKDGLFCERIFGPIKSGICACGNYRVIGNDKEDPKFCEQCGVEFVDSRIRRYQMGYIKLACPVTHVWYLKRLPSYIANLLDKPLKELEGLVYCDFSFARPIAKKPTFLRLRGSFEYEIQSWKYSIPLFFTTQGFDAFRNREISTGAGAIREQLADLDLPIIIDYSLVEWKELGEERPTVNEWEDRKVGRRKDFLVRRMELAKHFIRTNIEPEWMVLCLLPVLPPELRPIIQIDGGKLMSSDINELYRRVIYRNNTLIDLLTTSRSTPGELVMCQEKLVQEAVDTLFDNGIRGQPMRDGHNKVYKSFSDIIEGKEGRFRETLLGKRVDYSGRSVIVVGPSLSLHRCGLPREIAIELFQTFVIRGLIRQHFASNIGVAKSKIREKEPVVWEILQDVMQGHPVLLNRAPTLHRLGIQAFQPILVEGHAICLHPLVCKGFNADFDGDQMAVHVPLSLEAQAEARLLMFSHTNLLSPAIGDPISVPTQDMLIGLYVLTSGNRRGICANRYNPCNYRNYQNERIDDNKYKYTKTQEKEPFFCNSYDAIGAYRQKRIHLDSPLWLRWRLDQRVITSREAPIEVHYQSLGTYHEIYGHLLIVRSIKKEILCIYLRTTVGHISLYREIEEAIQGFFRACSYGT.

The Zn(2+) site is built by C69, C71, C87, and C90. Residues D489, D491, and D493 each coordinate Mg(2+).

This sequence belongs to the RNA polymerase beta' chain family. RpoC1 subfamily. In terms of assembly, in plastids the minimal PEP RNA polymerase catalytic core is composed of four subunits: alpha, beta, beta', and beta''. When a (nuclear-encoded) sigma factor is associated with the core the holoenzyme is formed, which can initiate transcription. It depends on Mg(2+) as a cofactor. Zn(2+) is required as a cofactor.

Its subcellular location is the plastid. The protein localises to the chloroplast. The catalysed reaction is RNA(n) + a ribonucleoside 5'-triphosphate = RNA(n+1) + diphosphate. Functionally, DNA-dependent RNA polymerase catalyzes the transcription of DNA into RNA using the four ribonucleoside triphosphates as substrates. This is DNA-directed RNA polymerase subunit beta' from Morus indica (Mulberry).